A 388-amino-acid chain; its full sequence is Chorismate synthase (388 aa).

Residues Arg39 and Arg45 each contribute to the NADP(+) site. FMN-binding positions include 130 to 132, 251 to 252, Ala296, 311 to 315, and Arg337; these read RSS, NA, and KPIPT.

The protein belongs to the chorismate synthase family. Homotetramer. FMNH2 is required as a cofactor.

The catalysed reaction is 5-O-(1-carboxyvinyl)-3-phosphoshikimate = chorismate + phosphate. It participates in metabolic intermediate biosynthesis; chorismate biosynthesis; chorismate from D-erythrose 4-phosphate and phosphoenolpyruvate: step 7/7. Functionally, catalyzes the anti-1,4-elimination of the C-3 phosphate and the C-6 proR hydrogen from 5-enolpyruvylshikimate-3-phosphate (EPSP) to yield chorismate, which is the branch point compound that serves as the starting substrate for the three terminal pathways of aromatic amino acid biosynthesis. This reaction introduces a second double bond into the aromatic ring system. The polypeptide is Chorismate synthase (Streptococcus equi subsp. zooepidemicus (strain MGCS10565)).